We begin with the raw amino-acid sequence, 766 residues long: Protein zer-1 homolog (766 aa).

Residue alanine 2 is modified to N-acetylalanine. 3 LRR repeats span residues 226–245 (SLVLYNMDLSDDHIRVIVQL), 246–268 (HKLRHLDISRDRLSSYYKFKLTR), and 278–302 (LGNLMSLDISGHMILENCSISKMEE). ARM repeat units follow at residues 427-467 (RSEQ…NFSI), 511-556 (DNDH…NITD), 558-600 (TPDN…NVAE), 602-643 (KELR…HIMF), and 714-756 (PDKY…HCSN).

This sequence belongs to the zyg-11 family. As to quaternary structure, interacts with the ELOC-ELOB/Elongin BC complex. Part of an E3 ubiquitin ligase complex including ZER1, CUL2 and Elongin BC. In terms of tissue distribution, expressed in testis, spermatocytes and spermatids (at protein level). Expressed in spermatocytes, spermatids, prostate, skeletal muscle, ovary, small intestine, heart, brain and pancreas.

Its function is as follows. Serves as substrate adapter subunit in the E3 ubiquitin ligase complex ZYG11B-CUL2-Elongin BC. Acts to target substrates bearing N-terminal degrons for proteasomal degradation with the first four residues of substrates being the key recognition elements. Involved in the clearance of proteolytic fragments generated by caspase cleavage during apoptosis since N-terminal glycine degrons are strongly enriched at caspase cleavage sites. Also important in the quality control of protein N-myristoylation in which N-terminal glycine degrons are conditionally exposed after a failure of N-myristoylation. The protein is Protein zer-1 homolog of Homo sapiens (Human).